The primary structure comprises 132 residues: Small ribosomal subunit protein uS8 (132 aa).

It belongs to the universal ribosomal protein uS8 family. In terms of assembly, part of the 30S ribosomal subunit. Contacts proteins S5 and S12.

Its function is as follows. One of the primary rRNA binding proteins, it binds directly to 16S rRNA central domain where it helps coordinate assembly of the platform of the 30S subunit. The sequence is that of Small ribosomal subunit protein uS8 from Borreliella afzelii (strain PKo) (Borrelia afzelii).